Reading from the N-terminus, the 194-residue chain is Probable WRKY transcription factor 51 (194 aa).

The tract at residues 58–97 (SSETFTGESGGSGSATTLSKKESTNRGSKESDQTKETGHR) is disordered. Over residues 76–96 (SKKESTNRGSKESDQTKETGH) the composition is skewed to basic and acidic residues. Positions 104–169 (SKIDVMDDGF…YEGVHNHESL (66 aa)) form a DNA-binding region, WRKY.

Belongs to the WRKY group II-c family. As to quaternary structure, interacts with CAMBP25/VQ15.

Its subcellular location is the nucleus. Its function is as follows. Transcription factor. Interacts specifically with the W box (5'-(T)TGAC[CT]-3'), a frequently occurring elicitor-responsive cis-acting element. Involved in defense responses. May act as positive regulator of salicylic acid (SA)-mediated signaling and negative regulator of jasmonic acid (JA)-mediated signaling. The chain is Probable WRKY transcription factor 51 (WRKY51) from Arabidopsis thaliana (Mouse-ear cress).